The following is a 259-amino-acid chain: Type III pantothenate kinase (259 aa).

Residue 6–13 (DCGNTNTL) participates in ATP binding. Residue 108-111 (GADR) coordinates substrate. D110 serves as the catalytic Proton acceptor. D130 is a K(+) binding site. T133 contributes to the ATP binding site. T185 serves as a coordination point for substrate.

This sequence belongs to the type III pantothenate kinase family. Homodimer. NH4(+) serves as cofactor. It depends on K(+) as a cofactor.

The protein resides in the cytoplasm. It carries out the reaction (R)-pantothenate + ATP = (R)-4'-phosphopantothenate + ADP + H(+). It participates in cofactor biosynthesis; coenzyme A biosynthesis; CoA from (R)-pantothenate: step 1/5. Its function is as follows. Catalyzes the phosphorylation of pantothenate (Pan), the first step in CoA biosynthesis. The polypeptide is Type III pantothenate kinase (Maricaulis maris (strain MCS10) (Caulobacter maris)).